The primary structure comprises 698 residues: Methionine--tRNA ligase (698 aa).

The 'HIGH' region motif lies at 18–28 (PYANGDLHVGH). The Zn(2+) site is built by Cys149, Cys152, Cys161, and Cys165. Thr350 contributes to the ATP binding site. The segment at 567-590 (EAADAGDEEGEDEDEEPPAADLEP) is disordered. Residues 570 to 584 (DAGDEEGEDEDEEPP) show a composition bias toward acidic residues. A tRNA-binding domain is found at 600–698 (DFQDLDIRVA…EDAEPGTKVQ (99 aa)).

The protein belongs to the class-I aminoacyl-tRNA synthetase family. MetG type 1 subfamily. As to quaternary structure, homodimer. Zn(2+) is required as a cofactor.

The protein resides in the cytoplasm. It catalyses the reaction tRNA(Met) + L-methionine + ATP = L-methionyl-tRNA(Met) + AMP + diphosphate. In terms of biological role, is required not only for elongation of protein synthesis but also for the initiation of all mRNA translation through initiator tRNA(fMet) aminoacylation. The protein is Methionine--tRNA ligase of Natronomonas pharaonis (strain ATCC 35678 / DSM 2160 / CIP 103997 / JCM 8858 / NBRC 14720 / NCIMB 2260 / Gabara) (Halobacterium pharaonis).